The sequence spans 302 residues: Ornithine carbamoyltransferase (302 aa).

Residues 47 to 50, glutamine 74, arginine 98, and 125 to 128 contribute to the carbamoyl phosphate site; these read STRT and HPCQ. Residues asparagine 156, aspartate 220, and 224–225 each bind L-ornithine; that span reads SM. Carbamoyl phosphate-binding positions include 260–261 and arginine 288; that span reads CL.

This sequence belongs to the aspartate/ornithine carbamoyltransferase superfamily. OTCase family.

It localises to the cytoplasm. It carries out the reaction carbamoyl phosphate + L-ornithine = L-citrulline + phosphate + H(+). It participates in amino-acid biosynthesis; L-arginine biosynthesis; L-arginine from L-ornithine and carbamoyl phosphate: step 1/3. Its function is as follows. Reversibly catalyzes the transfer of the carbamoyl group from carbamoyl phosphate (CP) to the N(epsilon) atom of ornithine (ORN) to produce L-citrulline. The chain is Ornithine carbamoyltransferase from Methanosphaera stadtmanae (strain ATCC 43021 / DSM 3091 / JCM 11832 / MCB-3).